The following is a 363-amino-acid chain: Type-2 angiotensin II receptor (363 aa).

Topologically, residues 1–45 (MKDNFSFAATSRNITSSLPFVNLNMSGTNDLIFNCSHKPSDKHLE) are extracellular. Asn4, Asn13, Asn24, and Asn34 each carry an N-linked (GlcNAc...) asparagine glycan. 2 disulfide bridges follow: Cys35–Cys290 and Cys117–Cys195. A helical transmembrane segment spans residues 46 to 70 (AIPVLYYLIFVIGFAVNIIVVSLFC). At 71-80 (CQKGPKKVSS) the chain is on the cytoplasmic side. A helical transmembrane segment spans residues 81-104 (IYIFNLAVADLLLLATLPLWATYY). Angiotensin II is bound by residues Tyr103 and Tyr104. The Extracellular segment spans residues 105-114 (SYRYDWLFGP). A helical transmembrane segment spans residues 115-140 (VMCKVFGSFLTLNMFASIFFITCMSV). Residues 141 to 159 (DRYQSVIYPFLSQRRNPWQ) lie on the Cytoplasmic side of the membrane. A helical transmembrane segment spans residues 160 to 181 (ASYVVPLVWCMACLSSLPTFYF). Residues Arg182, Tyr204, and Lys215 each contribute to the angiotensin II site. The Extracellular portion of the chain corresponds to 182–206 (RDVRTIEYLGVNACVMAFPPEKYAQ). The helical transmembrane segment at 207-232 (WSAGIALMKNVLGFIIPLIFIATCYF) threads the bilayer. Over 233–257 (GIRKHLLKTNSYGKNRITRDQVLKM) the chain is Cytoplasmic. The chain crosses the membrane as a helical span at residues 258–281 (AAAVVLAFIICWLPFHVLTFLDAL). Asp279 is an angiotensin II binding site. Over 282 to 294 (SWMGIINSCEVMA) the chain is Extracellular. The helical transmembrane segment at 295-320 (VIDLALPFAILLGFTNSCVNPFLYCF) threads the bilayer. Asp297 serves as a coordination point for angiotensin II. Residues 321–363 (VGNRFQQKLRSMFRVPITWLQGKRETMSCRKSSSLREMDTFVS) lie on the Cytoplasmic side of the membrane. Residues 324-333 (RFQQKLRSMF) form a helix VIII region. Residue Ser354 is modified to Phosphoserine; by PKC.

Belongs to the G-protein coupled receptor 1 family. In terms of assembly, interacts with MTUS1.

The protein localises to the cell membrane. Its function is as follows. Receptor for angiotensin II, a vasoconstricting peptide. Signals primarily via a non-canonical G-protein- and beta-arrestin independent pathways. Cooperates with MTUS1 to inhibit ERK2 activation and cell proliferation. This is Type-2 angiotensin II receptor (AGTR2) from Meriones unguiculatus (Mongolian jird).